A 117-amino-acid chain; its full sequence is Large ribosomal subunit protein uL18 (117 aa).

Belongs to the universal ribosomal protein uL18 family. Part of the 50S ribosomal subunit; part of the 5S rRNA/L5/L18/L25 subcomplex. Contacts the 5S and 23S rRNAs.

Functionally, this is one of the proteins that bind and probably mediate the attachment of the 5S RNA into the large ribosomal subunit, where it forms part of the central protuberance. The polypeptide is Large ribosomal subunit protein uL18 (Laribacter hongkongensis (strain HLHK9)).